The primary structure comprises 60 residues: Protein YoaG (60 aa).

In terms of assembly, homodimer.

This is Protein YoaG (yoaG) from Escherichia coli O157:H7.